A 270-amino-acid chain; its full sequence is NAD kinase (270 aa).

Asp63 serves as the catalytic Proton acceptor. NAD(+) contacts are provided by residues 63-64 (DG), Arg68, 131-132 (NE), Lys142, Arg159, Asp161, 172-177 (TAYAMS), Ala196, and Gln230.

Belongs to the NAD kinase family. A divalent metal cation is required as a cofactor.

Its subcellular location is the cytoplasm. The enzyme catalyses NAD(+) + ATP = ADP + NADP(+) + H(+). Involved in the regulation of the intracellular balance of NAD and NADP, and is a key enzyme in the biosynthesis of NADP. Catalyzes specifically the phosphorylation on 2'-hydroxyl of the adenosine moiety of NAD to yield NADP. This chain is NAD kinase, found in Methanoregula boonei (strain DSM 21154 / JCM 14090 / 6A8).